A 542-amino-acid chain; its full sequence is CTP synthase (542 aa).

Positions 1-265 are amidoligase domain; it reads MARYVFITGG…DNEVLAAFGI (265 aa). S13 lines the CTP pocket. S13 provides a ligand contact to UTP. ATP-binding positions include 14–19 and D71; that span reads SLGKGI. Mg(2+)-binding residues include D71 and E139. CTP contacts are provided by residues 146-148, 186-191, and K222; these read DIE and KTKPTQ. Residues 186-191 and K222 contribute to the UTP site; that span reads KTKPTQ. Residues 291–541 enclose the Glutamine amidotransferase type-1 domain; sequence TIAIVGKYTG…IEAALEQSRL (251 aa). G353 is an L-glutamine binding site. Catalysis depends on C380, which acts as the Nucleophile; for glutamine hydrolysis. L-glutamine-binding positions include 381–384, E404, and R469; that span reads FGMQ. Catalysis depends on residues H514 and E516.

Belongs to the CTP synthase family. Homotetramer.

The catalysed reaction is UTP + L-glutamine + ATP + H2O = CTP + L-glutamate + ADP + phosphate + 2 H(+). The enzyme catalyses L-glutamine + H2O = L-glutamate + NH4(+). It carries out the reaction UTP + NH4(+) + ATP = CTP + ADP + phosphate + 2 H(+). It participates in pyrimidine metabolism; CTP biosynthesis via de novo pathway; CTP from UDP: step 2/2. Allosterically activated by GTP, when glutamine is the substrate; GTP has no effect on the reaction when ammonia is the substrate. The allosteric effector GTP functions by stabilizing the protein conformation that binds the tetrahedral intermediate(s) formed during glutamine hydrolysis. Inhibited by the product CTP, via allosteric rather than competitive inhibition. Its function is as follows. Catalyzes the ATP-dependent amination of UTP to CTP with either L-glutamine or ammonia as the source of nitrogen. Regulates intracellular CTP levels through interactions with the four ribonucleotide triphosphates. This chain is CTP synthase, found in Sinorhizobium medicae (strain WSM419) (Ensifer medicae).